Reading from the N-terminus, the 335-residue chain is Probable cyclin-H (335 aa).

It belongs to the cyclin family. Cyclin C subfamily.

The protein localises to the nucleus. Its function is as follows. Regulates CDK7, the catalytic subunit of the CDK-activating kinase (CAK) enzymatic complex. This chain is Probable cyclin-H (CYCH), found in Echinococcus multilocularis (Fox tapeworm).